A 575-amino-acid chain; its full sequence is Arginine--tRNA ligase (575 aa).

Residues 130 to 140 carry the 'HIGH' region motif; that stretch reads ANPTGPMHVGH.

The protein belongs to the class-I aminoacyl-tRNA synthetase family. In terms of assembly, monomer.

It localises to the cytoplasm. It carries out the reaction tRNA(Arg) + L-arginine + ATP = L-arginyl-tRNA(Arg) + AMP + diphosphate. The chain is Arginine--tRNA ligase from Magnetococcus marinus (strain ATCC BAA-1437 / JCM 17883 / MC-1).